Consider the following 643-residue polypeptide: 1-deoxy-D-xylulose-5-phosphate synthase (643 aa).

Residues His-71 and 112–114 (SHA) each bind thiamine diphosphate. Asp-144 provides a ligand contact to Mg(2+). Thiamine diphosphate contacts are provided by residues 145–146 (GA), Asn-173, Tyr-284, and Glu-365. Asn-173 serves as a coordination point for Mg(2+).

This sequence belongs to the transketolase family. DXPS subfamily. Homodimer. It depends on Mg(2+) as a cofactor. The cofactor is thiamine diphosphate.

The enzyme catalyses D-glyceraldehyde 3-phosphate + pyruvate + H(+) = 1-deoxy-D-xylulose 5-phosphate + CO2. It functions in the pathway metabolic intermediate biosynthesis; 1-deoxy-D-xylulose 5-phosphate biosynthesis; 1-deoxy-D-xylulose 5-phosphate from D-glyceraldehyde 3-phosphate and pyruvate: step 1/1. Catalyzes the acyloin condensation reaction between C atoms 2 and 3 of pyruvate and glyceraldehyde 3-phosphate to yield 1-deoxy-D-xylulose-5-phosphate (DXP). This chain is 1-deoxy-D-xylulose-5-phosphate synthase, found in Mycobacterium leprae (strain Br4923).